A 361-amino-acid polypeptide reads, in one-letter code: Alanine racemase (361 aa).

The Proton acceptor; specific for D-alanine role is filled by Lys34. At Lys34 the chain carries N6-(pyridoxal phosphate)lysine. A substrate-binding site is contributed by Arg129. Tyr254 acts as the Proton acceptor; specific for L-alanine in catalysis. A substrate-binding site is contributed by Met302.

Belongs to the alanine racemase family. Pyridoxal 5'-phosphate serves as cofactor.

The enzyme catalyses L-alanine = D-alanine. The catalysed reaction is L-serine = D-serine. It functions in the pathway amino-acid biosynthesis; D-alanine biosynthesis; D-alanine from L-alanine: step 1/1. Its function is as follows. Catalyzes the interconversion of L-alanine and D-alanine. Likely plays an important role in supplying D-alanine, which is an indispensable constituent in the biosynthesis of bacterial cell-wall peptidoglycan. To a lesser extent, is also able to racemize L-serine and D-serine. Does not act on other proteinogenic amino-acids. This chain is Alanine racemase (alr1), found in Vibrio cholerae serotype O1 (strain ATCC 39315 / El Tor Inaba N16961).